Here is a 176-residue protein sequence, read N- to C-terminus: NADH-quinone oxidoreductase subunit I 1 (176 aa).

4Fe-4S ferredoxin-type domains follow at residues 45 to 77 (IVLT…MEAT) and 87 to 116 (RWFR…MTPD). Positions 57, 60, 63, 67, 96, 99, 102, and 106 each coordinate [4Fe-4S] cluster.

This sequence belongs to the complex I 23 kDa subunit family. As to quaternary structure, NDH-1 is composed of 14 different subunits. Subunits NuoA, H, J, K, L, M, N constitute the membrane sector of the complex. [4Fe-4S] cluster is required as a cofactor.

The protein localises to the cell inner membrane. It catalyses the reaction a quinone + NADH + 5 H(+)(in) = a quinol + NAD(+) + 4 H(+)(out). Functionally, NDH-1 shuttles electrons from NADH, via FMN and iron-sulfur (Fe-S) centers, to quinones in the respiratory chain. The immediate electron acceptor for the enzyme in this species is believed to be ubiquinone. Couples the redox reaction to proton translocation (for every two electrons transferred, four hydrogen ions are translocated across the cytoplasmic membrane), and thus conserves the redox energy in a proton gradient. The chain is NADH-quinone oxidoreductase subunit I 1 from Geobacter metallireducens (strain ATCC 53774 / DSM 7210 / GS-15).